Consider the following 174-residue polypeptide: Repair DNA polymerase X (174 aa).

Positions 42-51 are involved in ssDNA binding; the sequence is REEKMLNDVD. Residues D49 and D51 each contribute to the Mg(2+) site. Residues C81 and C86 are joined by a disulfide bond. D100 contributes to the Mg(2+) binding site.

This sequence belongs to the DNA polymerase type-X family. Requires Mg(2+) as cofactor.

The protein localises to the virion. It catalyses the reaction DNA(n) + a 2'-deoxyribonucleoside 5'-triphosphate = DNA(n+1) + diphosphate. Error-prone polymerase lacking a proofreading 3'-5' exonuclease which catalyzes the gap-filling reaction during the DNA repair process. Specifically binds intermediates in the single-nucleotide base-excision repair process. Also catalyzes DNA polymerization with low nucleotide-insertion fidelity. Probably acts as a strategic DNA mutase, which gives rise to a rapid emergence of variants. Generates mismatched G-G pairs, in that case, the polymerase first binds the deoxynucleotide followed by mismatch formation. Together with the viral DNA ligase, fills the single nucleotide gaps generated by the AP endonuclease. Binds DNA with high affinity via the helix alphaE. This chain is Repair DNA polymerase X, found in African swine fever virus (isolate Tick/South Africa/Pretoriuskop Pr4/1996) (ASFV).